The chain runs to 48 residues: Osteocalcin (48 aa).

The region spanning 1-44 is the Gla domain; the sequence is AGTAPADLTVAQLESLKEVCEANLACEHMMDVSGIIAAYTAYYG. Ca(2+) contacts are provided by Glu-14, Glu-18, Glu-21, and Glu-27. A 4-carboxyglutamate mark is found at Glu-14, Glu-18, and Glu-21. The cysteines at positions 20 and 26 are disulfide-linked.

The protein belongs to the osteocalcin/matrix Gla protein family. Post-translationally, gamma-carboxyglutamate residues are formed by vitamin K dependent carboxylation by GGCX. These residues are essential for the binding of calcium.

The protein resides in the secreted. It localises to the extracellular space. The protein localises to the extracellular matrix. The carboxylated form is one of the main organic components of the bone matrix, which constitutes 1-2% of the total bone protein. The carboxylated form binds strongly to apatite and calcium. The chain is Osteocalcin (bglap) from Cyprinus carpio (Common carp).